A 333-amino-acid chain; its full sequence is Flotillin-like protein FloA (333 aa).

Transmembrane regions (helical) follow at residues 8 to 28 (LMPI…FTFI) and 30 to 50 (VGLW…TLVG).

It belongs to the flotillin-like FloA family. In terms of assembly, homooligomerizes.

The protein resides in the cell membrane. The protein localises to the membrane raft. Found in functional membrane microdomains (FMM) that may be equivalent to eukaryotic membrane rafts. FMMs are highly dynamic and increase in number as cells age. Flotillins are thought to be important factors in membrane fluidity. The protein is Flotillin-like protein FloA of Desulfitobacterium hafniense (strain DSM 10664 / DCB-2).